The chain runs to 606 residues: (R)-limonene synthase 1, chloroplastic (606 aa).

A chloroplast-targeting transit peptide spans 1-32 (MSSCINPSTLVTSVNAFKCLPLATNKAAIRIM). Positions 342 and 346 each coordinate Mn(2+). Substrate is bound by residues aspartate 342, aspartate 346, arginine 484, aspartate 487, and lysine 503. The short motif at 342-346 (DDIYD) is the DDXXD motif element. Aspartate 487 is a Mn(2+) binding site.

Belongs to the terpene synthase family. Requires Mg(2+) as cofactor. It depends on Mn(2+) as a cofactor.

It localises to the plastid. The protein localises to the chloroplast. The enzyme catalyses (2E)-geranyl diphosphate = (4R)-limonene + diphosphate. The chain is (R)-limonene synthase 1, chloroplastic from Citrus limon (Lemon).